A 141-amino-acid polypeptide reads, in one-letter code: Nucleoside diphosphate kinase (141 aa).

Residues lysine 11, phenylalanine 59, arginine 87, threonine 93, arginine 104, and asparagine 114 each coordinate ATP. Histidine 117 functions as the Pros-phosphohistidine intermediate in the catalytic mechanism.

Belongs to the NDK family. As to quaternary structure, homotetramer. Mg(2+) is required as a cofactor.

Its subcellular location is the cytoplasm. It catalyses the reaction a 2'-deoxyribonucleoside 5'-diphosphate + ATP = a 2'-deoxyribonucleoside 5'-triphosphate + ADP. The catalysed reaction is a ribonucleoside 5'-diphosphate + ATP = a ribonucleoside 5'-triphosphate + ADP. Major role in the synthesis of nucleoside triphosphates other than ATP. The ATP gamma phosphate is transferred to the NDP beta phosphate via a ping-pong mechanism, using a phosphorylated active-site intermediate. This is Nucleoside diphosphate kinase from Histophilus somni (strain 2336) (Haemophilus somnus).